A 366-amino-acid chain; its full sequence is Carbamoyl phosphate synthase small chain (366 aa).

Residues Met-1–Asp-171 are CPSase. L-glutamine contacts are provided by Ser-47, Gly-221, and Gly-223. The Glutamine amidotransferase type-1 domain maps to Ser-173 to Lys-360. Catalysis depends on Cys-248, which acts as the Nucleophile. Residues Leu-249, Gln-252, Asn-290, Gly-292, and Tyr-293 each contribute to the L-glutamine site. Catalysis depends on residues His-333 and Glu-335.

This sequence belongs to the CarA family. Composed of two chains; the small (or glutamine) chain promotes the hydrolysis of glutamine to ammonia, which is used by the large (or ammonia) chain to synthesize carbamoyl phosphate. Tetramer of heterodimers (alpha,beta)4.

It catalyses the reaction hydrogencarbonate + L-glutamine + 2 ATP + H2O = carbamoyl phosphate + L-glutamate + 2 ADP + phosphate + 2 H(+). The catalysed reaction is L-glutamine + H2O = L-glutamate + NH4(+). It functions in the pathway amino-acid biosynthesis; L-arginine biosynthesis; carbamoyl phosphate from bicarbonate: step 1/1. The protein operates within pyrimidine metabolism; UMP biosynthesis via de novo pathway; (S)-dihydroorotate from bicarbonate: step 1/3. Small subunit of the glutamine-dependent carbamoyl phosphate synthetase (CPSase). CPSase catalyzes the formation of carbamoyl phosphate from the ammonia moiety of glutamine, carbonate, and phosphate donated by ATP, constituting the first step of 2 biosynthetic pathways, one leading to arginine and/or urea and the other to pyrimidine nucleotides. The small subunit (glutamine amidotransferase) binds and cleaves glutamine to supply the large subunit with the substrate ammonia. The polypeptide is Carbamoyl phosphate synthase small chain (Staphylococcus epidermidis (strain ATCC 35984 / DSM 28319 / BCRC 17069 / CCUG 31568 / BM 3577 / RP62A)).